The chain runs to 105 residues: Small cysteine and glycine repeat-containing protein 10 (105 aa).

The tract at residues 4–41 (CGCGGCGGRCSGGCGGGCGGGCGGGCGGGCGGCGGGCG) is 10 X 2 AA repeats of CG.

Belongs to the KRTAP type 28 family.

Functionally, in the hair cortex, hair keratin intermediate filaments are embedded in an interfilamentous matrix, consisting of hair keratin-associated proteins (KRTAP), which are essential for the formation of a rigid and resistant hair shaft through their extensive disulfide bond cross-linking with abundant cysteine residues of hair keratins. The matrix proteins include the high-sulfur and high-glycine-tyrosine keratins. In Homo sapiens (Human), this protein is Small cysteine and glycine repeat-containing protein 10.